A 146-amino-acid chain; its full sequence is SecB-like chaperone SmegB (146 aa).

The protein belongs to the SecB-like family.

Chaperone component of an orphan antitoxin chaperone (AC) system; there is no toxin gene in close genomic proximity. When expressed in E.coli complements the cold-sensitive phenotype of a secB deletion, suggesting it may have a generic chaperone function. Does not however complement the toxin-neutralizing effect of its M.tuberculosis paralog Rv1957 (AC P95257) in E.coli, probably because the antitoxin genes are not from the same family. The chain is SecB-like chaperone SmegB from Mycolicibacterium smegmatis (strain ATCC 700084 / mc(2)155) (Mycobacterium smegmatis).